A 565-amino-acid polypeptide reads, in one-letter code: Liver carboxylesterase 1 (565 aa).

An N-terminal signal peptide occupies residues 1–18; sequence MWLCALSLISLTACLSLG. An intrachain disulfide couples Cys-87 to Cys-116. Ser-221 functions as the Acyl-ester intermediate in the catalytic mechanism. Cysteines 273 and 284 form a disulfide. Glu-353 serves as the catalytic Charge relay system. The residue at position 378 (Ser-378) is a Phosphoserine. The N-linked (GlcNAc...) asparagine glycan is linked to Asn-388. The active-site Charge relay system is His-466. A glycan (N-linked (GlcNAc...) asparagine) is linked at Asn-489.

It belongs to the type-B carboxylesterase/lipase family. In terms of assembly, homotrimer and homohexamer. Binds to beta-glucuronidase. Detected in kidney, liver and lung.

It localises to the endoplasmic reticulum lumen. The protein resides in the cytoplasm. Its subcellular location is the lipid droplet. The enzyme catalyses a carboxylic ester + H2O = an alcohol + a carboxylate + H(+). It catalyses the reaction cholesteryl (9Z-octadecenoate) + H2O = cholesterol + (9Z)-octadecenoate + H(+). It carries out the reaction 2-(5Z,8Z,11Z,14Z-eicosatetraenoyl)-glycerol + H2O = glycerol + (5Z,8Z,11Z,14Z)-eicosatetraenoate + H(+). The catalysed reaction is prostaglandin E2 1-glyceryl ester + H2O = prostaglandin E2 + glycerol + H(+). The enzyme catalyses a cholesterol ester + H2O = cholesterol + a fatty acid + H(+). It catalyses the reaction prostaglandin F2alpha 1-glyceryl ester + H2O = prostaglandin F2alpha + glycerol + H(+). Involved in the detoxification of xenobiotics and in the activation of ester and amide prodrugs. Hydrolyzes aromatic and aliphatic esters, but has no catalytic activity toward amides or a fatty acyl-CoA ester. Displays fatty acid ethyl ester synthase activity, catalyzing the ethyl esterification of oleic acid to ethyloleate. Converts monoacylglycerides to free fatty acids and glycerol. Hydrolyzes of 2-arachidonoylglycerol and prostaglandins. Hydrolyzes cellular cholesteryl esters to free cholesterols and promotes reverse cholesterol transport (RCT) by facilitating both the initial and final steps in the process. First of all, allows free cholesterol efflux from macrophages to extracellular cholesterol acceptors and secondly, releases free cholesterol from lipoprotein-delivered cholesteryl esters in the liver for bile acid synthesis or direct secretion into the bile. The chain is Liver carboxylesterase 1 from Mus musculus (Mouse).